Here is a 128-residue protein sequence, read N- to C-terminus: Large ribosomal subunit protein uL22 (128 aa).

It belongs to the universal ribosomal protein uL22 family. As to quaternary structure, part of the 50S ribosomal subunit.

This protein binds specifically to 23S rRNA; its binding is stimulated by other ribosomal proteins, e.g. L4, L17, and L20. It is important during the early stages of 50S assembly. It makes multiple contacts with different domains of the 23S rRNA in the assembled 50S subunit and ribosome. In terms of biological role, the globular domain of the protein is located near the polypeptide exit tunnel on the outside of the subunit, while an extended beta-hairpin is found that lines the wall of the exit tunnel in the center of the 70S ribosome. In Methylobacterium radiotolerans (strain ATCC 27329 / DSM 1819 / JCM 2831 / NBRC 15690 / NCIMB 10815 / 0-1), this protein is Large ribosomal subunit protein uL22.